We begin with the raw amino-acid sequence, 372 residues long: Embryonic growth/differentiation factor 1 (372 aa).

Residues 1–29 form the signal peptide; it reads MPPPQQGPCGHHLLLLLALLLPSLPLTRA. The propeptide occupies 30–253; that stretch reads PVPPGPAAAL…LCHPLARPRR (224 aa). The interval 67–86 is disordered; the sequence is RRRDPQETRSGSRRTSPGVT. N-linked (GlcNAc...) asparagine glycosylation occurs at Asn206. Intrachain disulfides connect Cys267/Cys337, Cys296/Cys369, and Cys300/Cys371.

This sequence belongs to the TGF-beta family. As to quaternary structure, homodimer; disulfide-linked. Expressed in the brain.

Its subcellular location is the secreted. Its function is as follows. May mediate cell differentiation events during embryonic development. The chain is Embryonic growth/differentiation factor 1 (GDF1) from Homo sapiens (Human).